The chain runs to 483 residues: Cysteine proteinase 1, mitochondrial (483 aa).

The transit peptide at 1–30 directs the protein to the mitochondrion; the sequence is MLPTSVSRSLYLKTFRSHLLRAPQIVLKRM. Active-site residues include Cys-102, His-398, and Asn-421. Residue Lys-483 is a propeptide, removed in mature form; by autocatalysis.

It belongs to the peptidase C1 family. Homohexamer. Binds to nucleic acids. Binds single-stranded DNA and RNA with higher affinity than double-stranded DNA. Post-translationally, the N-terminus of isoform Cytoplasmic is blocked.

It is found in the mitochondrion. Its subcellular location is the cytoplasm. The catalysed reaction is Inactivates bleomycin B2 (a cytotoxic glycometallopeptide) by hydrolysis of a carboxyamide bond of beta-aminoalanine, but also shows general aminopeptidase activity. The specificity varies somewhat with source, but amino acid arylamides of Met, Leu and Ala are preferred.. Its activity is regulated as follows. Inhibited by E64, a specific inhibitor of cysteine proteases, N-ethylmaleimide, iodacetamide, and mercury and zinc ions. In terms of biological role, the normal physiological role of the enzyme is unknown, but it is not essential for the viability of yeast cells. Has aminopeptidase activity, shortening substrate peptides sequentially by 1 amino acid. Has bleomycin hydrolase activity, which can protect the cell from the toxic effects of bleomycin. Has homocysteine-thiolactonase activity, protecting the cell against homocysteine toxicity. Acts as a repressor in the GAL4 regulatory system, but this does not require either the peptidase or nucleic acid-binding activities. This chain is Cysteine proteinase 1, mitochondrial (LAP3), found in Saccharomyces cerevisiae (strain AWRI1631) (Baker's yeast).